The chain runs to 477 residues: Protoporphyrinogen oxidase (477 aa).

Residues 9–14 (GGGISG), 34–35 (ES), tryptophan 42, 57–60 (GPRG), valine 257, alanine 449, and 454–456 (VAV) contribute to the FAD site.

This sequence belongs to the protoporphyrinogen/coproporphyrinogen oxidase family. Protoporphyrinogen oxidase subfamily. In terms of assembly, monomer. Homodimer. The cofactor is FAD. As to expression, expressed in heart, brain, placenta, lung, liver, skeletal muscle, kidney and pancreas.

Its subcellular location is the mitochondrion inner membrane. It carries out the reaction protoporphyrinogen IX + 3 O2 = protoporphyrin IX + 3 H2O2. It participates in porphyrin-containing compound metabolism; protoporphyrin-IX biosynthesis; protoporphyrin-IX from protoporphyrinogen-IX: step 1/1. Catalyzes the 6-electron oxidation of protoporphyrinogen-IX to form protoporphyrin-IX. In Homo sapiens (Human), this protein is Protoporphyrinogen oxidase (PPOX).